Consider the following 987-residue polypeptide: Probable outer membrane protein PmpG (987 aa).

The signal sequence occupies residues 1–25 (MMQTPFHKFFLLAMLSYSLLQGGHA). Positions 707 to 987 (GRAYCRGIWI…GLSIGSKIRF (281 aa)) constitute an Autotransporter domain.

This sequence belongs to the PMP outer membrane protein family.

It is found in the secreted. The protein localises to the cell wall. The protein resides in the cell outer membrane. This chain is Probable outer membrane protein PmpG (pmpG), found in Chlamydia muridarum (strain MoPn / Nigg).